The chain runs to 983 residues: Glycine dehydrogenase (decarboxylating) (983 aa).

At K731 the chain carries N6-(pyridoxal phosphate)lysine.

The protein belongs to the GcvP family. In terms of assembly, the glycine cleavage system is composed of four proteins: P, T, L and H. The cofactor is pyridoxal 5'-phosphate.

It carries out the reaction N(6)-[(R)-lipoyl]-L-lysyl-[glycine-cleavage complex H protein] + glycine + H(+) = N(6)-[(R)-S(8)-aminomethyldihydrolipoyl]-L-lysyl-[glycine-cleavage complex H protein] + CO2. In terms of biological role, the glycine cleavage system catalyzes the degradation of glycine. The P protein binds the alpha-amino group of glycine through its pyridoxal phosphate cofactor; CO(2) is released and the remaining methylamine moiety is then transferred to the lipoamide cofactor of the H protein. The chain is Glycine dehydrogenase (decarboxylating) from Nostoc sp. (strain PCC 7120 / SAG 25.82 / UTEX 2576).